Reading from the N-terminus, the 743-residue chain is Homeobox-leucine zipper protein PROTODERMAL FACTOR 2 (743 aa).

The tract at residues 1 to 72 (MYHPNMFESH…KKRYHRHTQR (72 aa)) is disordered. Positions 30 to 39 (SREDDFETKS) are enriched in basic and acidic residues. The segment covering 60 to 71 (PNKKKRYHRHTQ) has biased composition (basic residues). The segment at residues 62–121 (KKKRYHRHTQRQIQELESFFKECPHPDDKQRKELSRDLNLEPLQVKFWFQNKRTQMKAQS) is a DNA-binding region (homeobox). The stretch at 110 to 192 (FQNKRTQMKA…DRISAIAAKY (83 aa)) forms a coiled coil. One can recognise an START domain in the interval 244-476 (SETDKPIIVE…LERQCERLAS (233 aa)).

The protein belongs to the HD-ZIP homeobox family. Class IV subfamily. In terms of assembly, interacts with GAI/RGA2, RGA/RGA1/GRS, RGL2/SCL19 and ATML1. Binds to AIL7/PLT7, ANT, BBM and AIL1. Specifically expressed in the layer 1 (L1) of shoot meristems.

The protein resides in the nucleus. Functionally, probable transcription factor that binds to the L1 box DNA sequence 5'-TAAATG[CT]A-3'. Plays a role in maintaining the identity of L1 cells, possibly by interacting with their L1 box or other target-gene promoters; binds to the LIP1 gene promoter and stimulates its expression upon imbibition. Acts as a positive regulator of gibberellins (GAs)-regulated epidermal gene expression (e.g. LIP1, LIP2, LTP1, FDH and PDF1). Functionally redundant to ATML1. Involved, together with HDG proteins (e.g. HDG1, HDG2, HDG5 and HDG12), in the regulation of flower organs development by promoting the expression of APETALA 3 (AP3) in the epidermis and internal cell layers of developing flowers. Seems to promote cell differentiation. The protein is Homeobox-leucine zipper protein PROTODERMAL FACTOR 2 of Arabidopsis thaliana (Mouse-ear cress).